The primary structure comprises 615 residues: DNA mismatch repair protein MutL (615 aa).

Residues 363-397 (FAEPAAREPVAPRYTPAPASGSRPAAPWPNAQPGY) are disordered. The segment covering 364–391 (AEPAAREPVAPRYTPAPASGSRPAAPWP) has biased composition (low complexity).

The protein belongs to the DNA mismatch repair MutL/HexB family.

Functionally, this protein is involved in the repair of mismatches in DNA. It is required for dam-dependent methyl-directed DNA mismatch repair. May act as a 'molecular matchmaker', a protein that promotes the formation of a stable complex between two or more DNA-binding proteins in an ATP-dependent manner without itself being part of a final effector complex. The chain is DNA mismatch repair protein MutL from Escherichia coli O9:H4 (strain HS).